The following is an 869-amino-acid chain: H(+)/Cl(-) exchange transporter 6 (869 aa).

The Cytoplasmic portion of the chain corresponds to 1 to 80 (MAGCRGSLCC…KKGRRYEAVK (80 aa)). 2 consecutive transmembrane segments (helical) span residues 81-113 (WMVV…FGVV) and 128-150 (LSLL…LVLI). Positions 156–160 (GSGIP) match the Selectivity filter part_1 motif. S157 contacts chloride. The helical intramembrane region spans 159 to 166 (IPEVKCYL). 2 helical membrane-spanning segments follow: residues 176-194 (RLRT…VAGG) and 200-217 (EGPM…LPQF). The Selectivity filter part_2 signature appears at 198 to 202 (EKEGP). 2 consecutive intramembrane regions (helical) follow at residues 241 to 253 (FVSA…VAAA) and 257 to 265 (PIGGTLFSL). 3 consecutive transmembrane segments (helical) span residues 277-294 (TWKV…LNFF), 335-364 (GFFV…YRMR), and 371-392 (KLVR…VFVA). N-linked (GlcNAc...) asparagine glycans are attached at residues N410, N422, and N432. The next 2 helical transmembrane spans lie at 462-481 (PVTL…WTYG) and 487-511 (GLFV…KSYI). The short motif at 487–491 (GLFVP) is the Selectivity filter part_3 element. A chloride-binding site is contributed by F489. Residues 519–533 (GTFALIGAAAFLGGV) constitute an intramembrane region (helical). Positions 534–536 (VRM) form an intramembrane region, note=Loop between two helices. The segment at residues 537–548 (TISLTVILIEST) is an intramembrane region (helical). An intramembrane region (note=Loop between two helices) is located at residues 549–552 (NEIT). A helical transmembrane segment spans residues 553 to 571 (YGLPIMVTLMVAKWTGDFF). The Cytoplasmic portion of the chain corresponds to 572-869 (NKGIYDIHVG…ARLRQHYQTI (298 aa)). Y576 provides a ligand contact to chloride. The CBS 1 domain occupies 605 to 662 (MEPNLTYVYPHTRIQSLVSILRTTVHHAFPVVTENRGNEKEFMKGNQLISNNIKFKKS). Residue 630–632 (HHA) coordinates ATP. S773 carries the post-translational modification Phosphoserine. One can recognise a CBS 2 domain in the interval 807-868 (MNPSPFTVSP…QARLRQHYQT (62 aa)). 849-852 (TRHN) serves as a coordination point for ATP.

Belongs to the chloride channel (TC 2.A.49) family. ClC-6/CLCN6 subfamily. Post-translationally, N-glycosylated on several asparagine residues. As to expression, testis, ovary, small intestine, brain and skeletal muscle. Low level expression in aortic and coronary vascular smooth muscle cells, and aortic endothelial cells. Isoform 3 is only detected in kidney.

The protein localises to the late endosome membrane. It carries out the reaction 2 chloride(in) + H(+)(out) = 2 chloride(out) + H(+)(in). In terms of biological role, voltage-gated channel mediating the exchange of chloride ions against protons. Functions as antiporter and contributes to the acidification of the late endosome lumen. The CLC channel family contains both chloride channels and proton-coupled anion transporters that exchange chloride or another anion for protons. The presence of conserved gating glutamate residues is typical for family members that function as antiporters. In Homo sapiens (Human), this protein is H(+)/Cl(-) exchange transporter 6.